The following is a 102-amino-acid chain: MDISIISDRNNPLLQRREIKFTVSFDAATPSIKDVKMKLVAVLNANKQVLVVDTLDQIFGKLEAEGYAKIYNDEKAMATIETKSVLEKNKIEEEAEAEVAEE.

The protein belongs to the eukaryotic ribosomal protein eS24 family.

The protein is Small ribosomal subunit protein eS24 of Methanococcus maripaludis (strain DSM 14266 / JCM 13030 / NBRC 101832 / S2 / LL).